Reading from the N-terminus, the 545-residue chain is MGAKLLQYDEEARKSILNGVNALADAVKVTLGPKGRNVIIDKSFGAPTVTKDGVTVAKEVELEDKFENMGAQMVREVASKTSDVAGDGTTTATILAQAIYREGAKTVAAGSNPMDVKRGIEKAVAAVVTELKNISKPTKDQKEIAQVGTISANNDETIGNIIAEAMGKVGKEGVITVEEAKGLETELEIVEGMQFDRGYLSPYFVTNPEKMEVSLEDALILIYEKKISGMKDLLPILEQIAKMGRPLLIIAEDIEGEALATLVVNKIRGTLHVAAVKAPGFGDRRKAMLEDIAILTGGTVISEDMGYKLENTRLEDLGRAKRIQIDKDNTTIIDGAGERAALEGRVKQIRAQIDETTSDYDREKLQERLAKLVGGVAVIKVGAATETEMKEKKARVEDALNATRAAVEEGIVPGGGVAYIRTLPILEALKLEGDEQVGVNIVRKALEEPLKMIAANAGMEGTIVVEKVKEQSGAFGFNARTEVYEDMIEAGVIDPTKVTRFALQNAASVASLMLTTQCMIAEKPEEKGAGMPGMPPGGGYPGMGM.

Residues 30-33 (TLGP), Lys-51, 87-91 (DGTTT), Gly-415, and Asp-494 each bind ATP. The disordered stretch occupies residues 526–545 (EKGAGMPGMPPGGGYPGMGM). Residues 536–545 (PGGGYPGMGM) show a composition bias toward gly residues.

Belongs to the chaperonin (HSP60) family. As to quaternary structure, forms a cylinder of 14 subunits composed of two heptameric rings stacked back-to-back. Interacts with the co-chaperonin GroES.

It is found in the cytoplasm. The enzyme catalyses ATP + H2O + a folded polypeptide = ADP + phosphate + an unfolded polypeptide.. In terms of biological role, together with its co-chaperonin GroES, plays an essential role in assisting protein folding. The GroEL-GroES system forms a nano-cage that allows encapsulation of the non-native substrate proteins and provides a physical environment optimized to promote and accelerate protein folding. This is Chaperonin GroEL 2 from Syntrophus aciditrophicus (strain SB).